Here is a 295-residue protein sequence, read N- to C-terminus: uncharacterized protein (295 aa).

It belongs to the ROK (NagC/XylR) family.

This is an uncharacterized protein from Clostridium perfringens (strain 13 / Type A).